A 400-amino-acid polypeptide reads, in one-letter code: CCA-adding enzyme (400 aa).

Residues Gly27 and Arg30 each coordinate ATP. CTP-binding residues include Gly27 and Arg30. 2 residues coordinate Mg(2+): Asp40 and Asp42. ATP contacts are provided by Arg111, Asp154, Arg157, Arg160, and Arg163. Residues Arg111, Asp154, Arg157, Arg160, and Arg163 each contribute to the CTP site.

This sequence belongs to the tRNA nucleotidyltransferase/poly(A) polymerase family. Bacterial CCA-adding enzyme type 3 subfamily. As to quaternary structure, homodimer. Mg(2+) is required as a cofactor.

It catalyses the reaction a tRNA precursor + 2 CTP + ATP = a tRNA with a 3' CCA end + 3 diphosphate. The catalysed reaction is a tRNA with a 3' CCA end + 2 CTP + ATP = a tRNA with a 3' CCACCA end + 3 diphosphate. Catalyzes the addition and repair of the essential 3'-terminal CCA sequence in tRNAs without using a nucleic acid template. Adds these three nucleotides in the order of C, C, and A to the tRNA nucleotide-73, using CTP and ATP as substrates and producing inorganic pyrophosphate. tRNA 3'-terminal CCA addition is required both for tRNA processing and repair. Also involved in tRNA surveillance by mediating tandem CCA addition to generate a CCACCA at the 3' terminus of unstable tRNAs. While stable tRNAs receive only 3'-terminal CCA, unstable tRNAs are marked with CCACCA and rapidly degraded. The protein is CCA-adding enzyme of Bacillus pumilus (strain SAFR-032).